Consider the following 833-residue polypeptide: MSFYNHKEIEPKWQGYWAEHHTFKTGTDASKPKFYALDMFPYPSGAGLHVGHPEGYTATDILSRYKRAQGYNVLHPMGWDAFGLPAEQYAMDTGNDPAEFTAENIANFKRQINALGFSYDWDREVNTTDPNYYKWTQWIFTKLYEKGLAYEAEVPVNWVEELGTAIANEEVLPDGTSERGGYPVVRKPMRQWMLKITAYAERLLNDLDELDWSESIKDMQRNWIGKSTGANVTFKVKGTDKEFTVFTTRPDTLFGATFTVLAPEHELVDAITSTEQAEAVADYKHQASLKSDLARTDLAKEKTGVWTGAYAINPVNGKEIPIWIADYVLASYGTGAVMAVPAHDQRDWEFAKQFDLPIVEVLEGGNVEEAAYTEDGLHVNSDFLDGLNKEDAIAKIVACLEEKGCGQEKVTYRLRDWLFSRQRYWGEPIPIIHWEDGTSTAVPESELPLVLPVTKDIRPSGTGESPLANLTDWLEVTREDGVKGRRETNTMPQWAGSSWYYLRYIDPHNTEKLADEDLLKQWLPVDIYVGGAEHAVLHLLYARFWHKFLYDLGVVPTKEPFQKLFNQGMILGTSYRDHRGALVATDKVEKRDGSFFHVETGEELEQAPAKMSKSLKNVVNPDDVVEQYGADTLRVYEMFMGPLDASIAWSEEGLEGSRKFLDRVYRLIRSKEIVAENNGALDKVYNETVKAVTEQIDSLKFNTAIAQLMVFVNAANKEDKLYVDYAKGFIQLIAPFAPHLAEELWQTVAATGESISYVTWPTWDESKLVEDEIEIVVQIKGKVRAKLMVAKDLSREELQEIALADEKVKAEIDGKEIVKVISVPNKLVNIVVK.

Residues 41 to 52 (PYPSGAGLHVGH) carry the 'HIGH' region motif. Positions 610 to 614 (KMSKS) match the 'KMSKS' region motif. An ATP-binding site is contributed by lysine 613.

Belongs to the class-I aminoacyl-tRNA synthetase family.

Its subcellular location is the cytoplasm. The catalysed reaction is tRNA(Leu) + L-leucine + ATP = L-leucyl-tRNA(Leu) + AMP + diphosphate. The polypeptide is Leucine--tRNA ligase (Streptococcus pneumoniae (strain 70585)).